The sequence spans 459 residues: Glycosyl hydrolase family 109 protein 1 (459 aa).

A signal peptide (tat-type signal) is located at residues 1 to 31; the sequence is MHNIHRRHFLKAAGAVTAGLVTANIALNANA. NAD(+) contacts are provided by residues 64–65, Asp86, 135–138, 155–156, and Asn184; these read ER, WEWH, and EV. Substrate contacts are provided by residues Tyr213, Arg232, 244 to 247, and Tyr326; that span reads YPTH. Tyr244 contributes to the NAD(+) binding site.

Belongs to the Gfo/Idh/MocA family. Glycosyl hydrolase 109 subfamily. Requires NAD(+) as cofactor. Predicted to be exported by the Tat system. The position of the signal peptide cleavage has not been experimentally proven.

In terms of biological role, glycosidase. The polypeptide is Glycosyl hydrolase family 109 protein 1 (Shewanella sp. (strain ANA-3)).